A 306-amino-acid chain; its full sequence is Porphobilinogen deaminase (306 aa).

An S-(dipyrrolylmethanemethyl)cysteine modification is found at Cys239.

This sequence belongs to the HMBS family. As to quaternary structure, monomer. Requires dipyrromethane as cofactor.

It catalyses the reaction 4 porphobilinogen + H2O = hydroxymethylbilane + 4 NH4(+). It functions in the pathway porphyrin-containing compound metabolism; protoporphyrin-IX biosynthesis; coproporphyrinogen-III from 5-aminolevulinate: step 2/4. Functionally, tetrapolymerization of the monopyrrole PBG into the hydroxymethylbilane pre-uroporphyrinogen in several discrete steps. The protein is Porphobilinogen deaminase of Helicobacter pylori (strain Shi470).